The sequence spans 684 residues: Glycine--tRNA ligase beta subunit (684 aa).

The protein belongs to the class-II aminoacyl-tRNA synthetase family. In terms of assembly, tetramer of two alpha and two beta subunits.

It localises to the cytoplasm. The enzyme catalyses tRNA(Gly) + glycine + ATP = glycyl-tRNA(Gly) + AMP + diphosphate. The protein is Glycine--tRNA ligase beta subunit of Pseudomonas savastanoi pv. phaseolicola (strain 1448A / Race 6) (Pseudomonas syringae pv. phaseolicola (strain 1448A / Race 6)).